The sequence spans 384 residues: Transcription factor 7 (384 aa).

The segment covering Met1–Asp16 has biased composition (gly residues). The CTNNB1-binding stretch occupies residues Met1–Ser59. Disordered regions lie at residues Met1–Glu88, Pro133–Val183, and Ser337–Leu384. Positions Asp35–Glu50 are enriched in basic and acidic residues. Over residues Ala62 to Ala78 the composition is skewed to gly residues. Residues Ile269–Ser337 constitute a DNA-binding region (HMG box). Residues Lys344–Arg348 carry the Nuclear localization signal motif. A compositionally biased stretch (basic and acidic residues) spans Lys352–Glu370. The span at Ala374 to Leu384 shows a compositional bias: low complexity.

The protein belongs to the TCF/LEF family. As to quaternary structure, binds the armadillo repeat of CTNNB1 and forms a stable complex. Interacts with TLE5, TLE1, TLE2, TLE3 and TLE4. Interacts with MLLT11. Long isoform interacts (via N-terminus) with SOX13; inhibits WNT-mediated transcriptional activity. Interacts with DAZAP2. As to expression, predominantly expressed in T-cells. Also detected in proliferating intestinal epithelial cells and in the basal epithelial cells of mammary gland epithelium.

The protein resides in the nucleus. In terms of biological role, transcriptional activator involved in T-cell lymphocyte differentiation. Necessary for the survival of CD4(+) CD8(+) immature thymocytes. Isoforms lacking the N-terminal CTNNB1 binding domain cannot fulfill this role. Binds to the T-lymphocyte-specific enhancer element (5'-WWCAAAG-3') found in the promoter of the CD3E gene. Represses expression of the T-cell receptor gamma gene in alpha-beta T-cell lineages. Required for the development of natural killer receptor-positive lymphoid tissue inducer T-cells. TLE1, TLE2, TLE3 and TLE4 repress transactivation mediated by TCF7 and CTNNB1. May also act as feedback transcriptional repressor of CTNNB1 and TCF7L2 target genes. The protein is Transcription factor 7 of Homo sapiens (Human).